We begin with the raw amino-acid sequence, 505 residues long: Ribose import ATP-binding protein RbsA 1 (505 aa).

2 ABC transporter domains span residues 13 to 249 and 254 to 503; these read LALR…VGRD and YPKQ…TGRA. Position 45–52 (45–52) interacts with ATP; sequence GENGAGKS.

Belongs to the ABC transporter superfamily. Ribose importer (TC 3.A.1.2.1) family. The complex is composed of an ATP-binding protein (RbsA), two transmembrane proteins (RbsC) and a solute-binding protein (RbsB).

The protein localises to the cell membrane. It carries out the reaction D-ribose(out) + ATP + H2O = D-ribose(in) + ADP + phosphate + H(+). In terms of biological role, part of the ABC transporter complex RbsABC involved in ribose import. Responsible for energy coupling to the transport system. In Streptomyces coelicolor (strain ATCC BAA-471 / A3(2) / M145), this protein is Ribose import ATP-binding protein RbsA 1.